An 838-amino-acid polypeptide reads, in one-letter code: Probable beta-glucosidase K (838 aa).

Asn19 carries an N-linked (GlcNAc...) asparagine glycan. The active site involves Asp232. Asn324 and Asn489 each carry an N-linked (GlcNAc...) asparagine glycan. The PA14 domain maps to 405–564 (EGQPGLRMRF…DPELAIARAV (160 aa)).

The protein belongs to the glycosyl hydrolase 3 family.

The protein localises to the secreted. It carries out the reaction Hydrolysis of terminal, non-reducing beta-D-glucosyl residues with release of beta-D-glucose.. The protein operates within glycan metabolism; cellulose degradation. Functionally, beta-glucosidases are one of a number of cellulolytic enzymes involved in the degradation of cellulosic biomass. Catalyzes the last step releasing glucose from the inhibitory cellobiose. The protein is Probable beta-glucosidase K (bglK) of Emericella nidulans (strain FGSC A4 / ATCC 38163 / CBS 112.46 / NRRL 194 / M139) (Aspergillus nidulans).